Reading from the N-terminus, the 477-residue chain is Histone-lysine N-methyltransferase SUV39H2 (477 aa).

The segment at 1–59 (MATARAKARGSEAGARCHRAPGPPPRPKARRTARRRRAETLTARRSRPSAGERRAGSQR) is disordered. Residues 27–37 (PKARRTARRRR) are compositionally biased toward basic residues. The Chromo domain occupies 118 to 176 (YEVEYLCDYKVAKGVEYYLVKWKGWPDSTNTWEPLRNLRCPQLLRQFSDDKKTYLAQER). In terms of domain architecture, Pre-SET spans 256 to 314 (FGCSCTDCFFDKCCPAEAGVVLAYNKKQQIKIQPGTPIYECNSRCRCGPECPNRIVQKG). Zn(2+) contacts are provided by Cys258, Cys260, Cys263, Cys268, Cys269, Cys296, Cys300, Cys302, and Cys306. The SET domain maps to 317 to 440 (YSLCIFKTSN…AGEELTFDYQ (124 aa)). S-adenosyl-L-methionine contacts are provided by residues 328–330 (CGW), Tyr371, and 397–398 (NH). Cys400 is a binding site for Zn(2+). 3 positions are modified to phosphoserine: Ser448, Ser451, and Ser455. A Post-SET domain is found at 461–477 (VRTQCKCGAETCRGYLN). Zn(2+) contacts are provided by Cys465, Cys467, and Cys472.

This sequence belongs to the class V-like SAM-binding methyltransferase superfamily. Histone-lysine methyltransferase family. Suvar3-9 subfamily. As to quaternary structure, interacts with SMAD5. The large PER complex involved in the histone methylation is composed of at least PER2, CBX3, TRIM28, SUV39H1 and/or SUV39H2; CBX3 mediates the formation of the complex. In terms of processing, ubiquitinated by the DCX(DCAF13) E3 ubiquitin ligase complex, leading to its degradation. As to expression, testis specific; predominant expression in type B spermatogonia and preleptotene spermatocytes.

Its subcellular location is the nucleus. It is found in the chromosome. It localises to the centromere. It catalyses the reaction L-lysyl(9)-[histone H3] + 3 S-adenosyl-L-methionine = N(6),N(6),N(6)-trimethyl-L-lysyl(9)-[histone H3] + 3 S-adenosyl-L-homocysteine + 3 H(+). In terms of biological role, histone methyltransferase that specifically trimethylates 'Lys-9' of histone H3 using monomethylated H3 'Lys-9' as substrate. H3 'Lys-9' trimethylation represents a specific tag for epigenetic transcriptional repression by recruiting HP1 (CBX1, CBX3 and/or CBX5) proteins to methylated histones. Mainly functions in heterochromatin regions, thereby playing a central role in the establishment of constitutive heterochromatin at pericentric and telomere regions. H3 'Lys-9' trimethylation is also required to direct DNA methylation at pericentric repeats. SUV39H1 is targeted to histone H3 via its interaction with RB1 and is involved in many processes, such as cell cycle regulation, transcriptional repression and regulation of telomere length. May participate in regulation of higher-order chromatin organization during spermatogenesis. Recruited by the large PER complex to the E-box elements of the circadian target genes such as PER2 itself or PER1, contributes to the conversion of local chromatin to a heterochromatin-like repressive state through H3 'Lys-9' trimethylation. This Mus musculus (Mouse) protein is Histone-lysine N-methyltransferase SUV39H2 (Suv39h2).